The sequence spans 217 residues: Thiopurine S-methyltransferase (217 aa).

S-adenosyl-L-methionine-binding residues include W11, L46, E67, and R122.

The protein belongs to the class I-like SAM-binding methyltransferase superfamily. TPMT family.

It localises to the cytoplasm. It carries out the reaction S-adenosyl-L-methionine + a thiopurine = S-adenosyl-L-homocysteine + a thiopurine S-methylether.. The sequence is that of Thiopurine S-methyltransferase from Vibrio atlanticus (strain LGP32) (Vibrio splendidus (strain Mel32)).